We begin with the raw amino-acid sequence, 316 residues long: Pantothenate kinase (316 aa).

95–102 lines the ATP pocket; that stretch reads GSVAVGKS.

The protein belongs to the prokaryotic pantothenate kinase family.

The protein localises to the cytoplasm. The catalysed reaction is (R)-pantothenate + ATP = (R)-4'-phosphopantothenate + ADP + H(+). Its pathway is cofactor biosynthesis; coenzyme A biosynthesis; CoA from (R)-pantothenate: step 1/5. This is Pantothenate kinase from Erwinia tasmaniensis (strain DSM 17950 / CFBP 7177 / CIP 109463 / NCPPB 4357 / Et1/99).